Consider the following 1158-residue polypeptide: Nuclear receptor-interacting protein 1 (1158 aa).

An interaction with ZNF366 region spans residues 1–415; that stretch reads MTHGEELGSD…EESSTPTTID (415 aa). The LXXLL motif 1 motif lies at 21–25; the sequence is LEGLL. The tract at residues 33-56 is disordered; the sequence is SGTAVDKKSAGHNEEDQNFNISGS. Residues 37–47 show a composition bias toward basic and acidic residues; sequence VDKKSAGHNEE. A repression domain 1 region spans residues 78–333; it reads MLHLKKARLL…HLNGQARTSS (256 aa). Residue Ser-104 is modified to Phosphoserine. N6-acetyllysine; alternate is present on Lys-111. Lys-111 is covalently cross-linked (Glycyl lysine isopeptide (Lys-Gly) (interchain with G-Cter in SUMO2); alternate). Residues 133–137 carry the LXXLL motif 2 motif; the sequence is LASLL. The residue at position 158 (Lys-158) is an N6-acetyllysine. Residue Lys-170 forms a Glycyl lysine isopeptide (Lys-Gly) (interchain with G-Cter in SUMO2) linkage. An LXXLL motif 3 motif is present at residues 185 to 189; that stretch reads LKTLL. Residues Lys-195 and Lys-198 each participate in a glycyl lysine isopeptide (Lys-Gly) (interchain with G-Cter in SUMO2) cross-link. Thr-207 is subject to Phosphothreonine. At Ser-218 the chain carries Phosphoserine. Positions 266-270 match the LXXLL motif 4 motif; it reads LALLL. N6-acetyllysine occurs at positions 286 and 310. Residue Ser-356 is modified to Phosphoserine. Lys-372 is covalently cross-linked (Glycyl lysine isopeptide (Lys-Gly) (interchain with G-Cter in SUMO2)). Position 378 is a phosphoserine (Ser-378). Residues 380 to 384 carry the LXXLL motif 5 motif; it reads LLHLL. Residues 393-435 form a disordered region; the sequence is MNGHSHSERGSIFEESSTPTTIDEYSDNNPSFTDDSSGDESSY. Over residues 406–435 the composition is skewed to polar residues; it reads EESSTPTTIDEYSDNNPSFTDDSSGDESSY. Residues 410–700 are repression domain 2; it reads TPTTIDEYSD…PTGPEPGLSG (291 aa). Residues 431–472 form a required for targeting to small nuclear foci region; that stretch reads DESSYSNCVPIDLSCKHRTEKSESDQPVSLDNFTQSLLNTWD. Residues 440–446 carry the CTBP-binding; principal site motif; sequence PIDLSCK. 2 positions are modified to N6-acetyllysine: Lys-446 and Lys-481. Position 487 is a phosphoserine (Ser-487). The LXXLL motif 6 signature appears at 500–504; that stretch reads LLQLL. A Glycyl lysine isopeptide (Lys-Gly) (interchain with G-Cter in SUMO2) cross-link involves residue Lys-508. Phosphoserine is present on Ser-518. The residue at position 528 (Lys-528) is an N6-acetyllysine. The interval 540–563 is disordered; that stretch reads IESPSTNRTTPVSTPPLLTSSKAG. The residue at position 542 (Ser-542) is a Phosphoserine. Low complexity predominate over residues 548-560; that stretch reads TTPVSTPPLLTSS. Ser-564 is subject to Phosphoserine. Short sequence motifs (CTBP-binding) lie at residues 565–569 and 599–603; these read PINLS and SMDLT. 2 disordered regions span residues 592–622 and 641–663; these read TNTA…AQNS and SSMS…DKPI. The span at 601–610 shows a compositional bias: basic and acidic residues; the sequence is DLTKSKDPPG. Lys-606 is subject to N6-acetyllysine. Polar residues predominate over residues 641–659; it reads SSMSVEEQRPSKQLLTGNT. Position 671 is a phosphoserine (Ser-671). The LXXLL motif 7 motif lies at 713–717; that stretch reads LQLLL. The disordered stretch occupies residues 716–745; it reads LLGNPNKGKSEKKEKTPLRDESTQEHSERA. Basic and acidic residues predominate over residues 723-745; sequence GKSEKKEKTPLRDESTQEHSERA. The interval 735–885 is repression domain 3; the sequence is DESTQEHSER…NIVDAANNHS (151 aa). The segment at 753 to 1158 is interaction with ZNF366; the sequence is VKIKSEPCDD…SVLTIKKESE (406 aa). Residues Lys-756 and Lys-802 each participate in a glycyl lysine isopeptide (Lys-Gly) (interchain with G-Cter in SUMO2) cross-link. Ser-807 is modified (phosphoserine). An LXXLL motif 8 motif is present at residues 819–823; the sequence is LSRLL. Glycyl lysine isopeptide (Lys-Gly) (interchain with G-Cter in SUMO2) cross-links involve residues Lys-850 and Lys-901. Lys-931 is modified (N6-acetyllysine; alternate). A Glycyl lysine isopeptide (Lys-Gly) (interchain with G-Cter in SUMO2); alternate cross-link involves residue Lys-931. An LXXLL motif 9 motif is present at residues 936–940; that stretch reads LKQLL. The CTBP-binding motif lies at 946–950; that stretch reads VRDLS. Residues 950-974 form a disordered region; the sequence is SPHRSNSVADSKKKGHKNNVTNSKP. Position 1001 is a phosphoserine (Ser-1001). Residues 1061–1074 carry the Ligand-dependent nuclear receptor binding motif; that stretch reads LTKTNPILYYMLQK. Residues Lys-1105, Lys-1115, and Lys-1154 each participate in a glycyl lysine isopeptide (Lys-Gly) (interchain with G-Cter in SUMO2) cross-link. The segment at 1118–1158 is repression domain 4; it reads FFNLRSPYNSHMGNNASRPHSANGEVYGLLGSVLTIKKESE.

In terms of assembly, interacts with RARA and RXRB homodimers and RARA/RXRB heterodimers in the presence of ligand. Interacts with HDAC1 and HDAC3 via its N-terminal domain. Interacts with NR2C1 (sumoylated form and via the ligand-binding domain); the interaction results in promoting the repressor activity of NR2C1. Interacts with CTBP1, CTBP2, ESR1, HDAC1, HDAC2, HDAC5, HDAC6, NR2C2, NR3C1, NR3C2, YWHAH, JUN and FOS. Found in a complex with both NR3C1 and YWHAH. Interacts with ZNF366. Interacts with RORA. Post-translationally, acetylation regulates its nuclear translocation and corepressive activity. Acetylation abolishes interaction with CTBP1. Phosphorylation enhances interaction with YWHAH.

It is found in the nucleus. In terms of biological role, modulates transcriptional activation by steroid receptors such as NR3C1, NR3C2 and ESR1. Also modulates transcriptional repression by nuclear hormone receptors. Positive regulator of the circadian clock gene expression: stimulates transcription of BMAL1, CLOCK and CRY1 by acting as a coactivator for RORA and RORC. Involved in the regulation of ovarian function. Plays a role in renal development. This is Nuclear receptor-interacting protein 1 (NRIP1) from Homo sapiens (Human).